Reading from the N-terminus, the 434-residue chain is Protein HEAT INTOLERANT 4 (434 aa).

A Nuclear localization signal 1 motif is present at residues 1–8; the sequence is MKKGAKRK. The span at 1–15 shows a compositional bias: basic residues; that stretch reads MKKGAKRKGVSKAGR. A disordered region spans residues 1 to 131; sequence MKKGAKRKGV…PVPKAKKPRA (131 aa). Residues 30–53 are compositionally biased toward basic and acidic residues; the sequence is ETTKTTQEESQQHEEEVVDEVKEN. A compositionally biased stretch (acidic residues) spans 54–82; it reads GEEEEAKGDQEEEEDAKPDSLEEDEENQE. Basic and acidic residues predominate over residues 83-98; sequence DEVKAEEVKEEVEKKP. The Nuclear localization signal 2 motif lies at 95–102; that stretch reads EKKPVARR. The segment covering 99-110 has biased composition (basic residues); the sequence is VARRGGKRKRAT. Over residues 111–122 the composition is skewed to basic and acidic residues; that stretch reads KKDTEIKDEKKP. Residues 363–394 adopt a coiled-coil conformation; sequence VKEQVRAAKKANREAKDARKKAIEEMSEDTKQ. The Nuclear localization signal 3 signature appears at 370–377; the sequence is AKKANREA.

Its subcellular location is the nucleus. The protein resides in the nucleolus. Essential protein required for basal thermotolerance, especially during heat-induced chromocentre decondensation, thus regulating transcriptional gene silencing (TGS). This is Protein HEAT INTOLERANT 4 from Arabidopsis thaliana (Mouse-ear cress).